Consider the following 495-residue polypeptide: Sugar phosphate exchanger 3 (495 aa).

Residues 16-36 (FSHHHMVVFLLTFFSYSLLHA) form a helical membrane-spanning segment. Residue Asn58 is glycosylated (N-linked (GlcNAc...) asparagine). The next 5 helical transmembrane spans lie at 82–102 (TLFL…GLFI), 114–134 (WVLS…GTLT), 148–168 (LWIV…AVMG), 178–198 (VVFG…ACLA), and 210–230 (FLVT…GLLV). N-linked (GlcNAc...) asparagine glycosylation is present at Asn267. 6 helical membrane-spanning segments follow: residues 298–318 (LAYA…PFYL), 334–354 (IWYD…SDML), 358–378 (APVL…YSRS), 387–407 (LLMA…SSAI), 429–449 (GIVD…VSLI), and 453–473 (LGWM…VLFI).

This sequence belongs to the major facilitator superfamily. Organophosphate:Pi antiporter (OPA) (TC 2.A.1.4) family. Interacts with ATRAID; the interaction is direct and both proteins are mutually dependent for their stability. Glycosylated.

Its subcellular location is the endoplasmic reticulum membrane. The protein localises to the lysosome membrane. In terms of biological role, unlike the other SLC37 members, lacks glucose-6-phosphate antiporter activity. In osteoclasts, forms a transporter complex with ATRAID for nitrogen-containing-bisphophonates (N-BPs) required for releasing N-BP molecules that have trafficked to lysosomes through fluid-phase endocytosis into the cytosol. The polypeptide is Sugar phosphate exchanger 3 (SLC37A3) (Bos taurus (Bovine)).